The sequence spans 500 residues: Coiled-coil domain-containing protein 85A (500 aa).

The segment covering 1–23 (MSKAAGGSAPAAESCPSAPAGAS) has biased composition (low complexity). Residues 1-30 (MSKAAGGSAPAAESCPSAPAGASTPTGVDD) form a disordered region. 2 coiled-coil regions span residues 38-104 (ELLQ…RDLC) and 132-171 (MHKE…DEEK). Disordered stretches follow at residues 200–405 (RDVG…SGMN) and 426–465 (NRML…QPEP). Low complexity predominate over residues 204-215 (DGSSTSSTGSTD). Basic and acidic residues predominate over residues 231 to 254 (HLQKPRSEGSPEHTKHRSTSPEHL). The span at 372–381 (GSGGSGGGSR) shows a compositional bias: gly residues. Positions 383 to 395 (GTLRRPAQEDSSS) are enriched in basic and acidic residues. Residues 404–429 (MNESTLSYVRQLEARVRQLEEENRML) are a coiled coil. Positions 434–463 (FRLSSGADGNNSSLNSPASFSGHTTPSQQP) are enriched in polar residues. Arg488 is subject to Asymmetric dimethylarginine.

This sequence belongs to the CCDC85 family. In terms of assembly, may interact with ARVCF; CTNND1; CTNND2 and PKP4.

It is found in the cell junction. The protein resides in the adherens junction. Functionally, may play a role in cell-cell adhesion and epithelium development through its interaction with proteins of the beta-catenin family. The chain is Coiled-coil domain-containing protein 85A (Ccdc85a) from Mus musculus (Mouse).